Consider the following 317-residue polypeptide: Melanocyte-stimulating hormone receptor (317 aa).

Topologically, residues 1–37 (MPLQGPQRRLLGSLNSTLPATPYLGLTTNQTEPPCLE) are extracellular. N29 carries N-linked (GlcNAc...) asparagine glycosylation. Residues 38-63 (VSIPDGLFLSLGLVSLVENVLVVTAI) form a helical membrane-spanning segment. Topologically, residues 64–72 (AKNRNLHSP) are cytoplasmic. A helical membrane pass occupies residues 73–93 (MYYFICCLAVSDLLVSMSNVL). The Extracellular portion of the chain corresponds to 94-118 (EMAILLLLEAGVLATQASVLQQLDN). Residues 119–140 (IIDVLICGSMVSSLCFLGSIAV) form a helical membrane-spanning segment. Residues 141–163 (DRYISIFYALRYHSIMMLPRVWR) lie on the Cytoplasmic side of the membrane. The helical transmembrane segment at 164–183 (AIVAIWVVSVLSSTLFIAYY) threads the bilayer. Over 184 to 191 (NHTAVLLC) the chain is Extracellular. A helical transmembrane segment spans residues 192 to 211 (LVTFFVAMLVLMAVLYVHML). Topologically, residues 212-240 (ARACQHARGIARLHKRQHPIHQGFGLKGA) are cytoplasmic. Residues 241 to 266 (ATLTILLGVFFLCWGPFFLHLSLLIL) traverse the membrane as a helical segment. Topologically, residues 267 to 279 (CPQHPTCGCVFKN) are extracellular. A helical membrane pass occupies residues 280–300 (FKLFLTLILCSAIVDPLIYAF). Residues 301–317 (RSQELRKTLQEVLLCSW) lie on the Cytoplasmic side of the membrane. C315 is lipidated: S-palmitoyl cysteine.

Belongs to the G-protein coupled receptor 1 family. Interacts with MGRN1, but does not undergo MGRN1-mediated ubiquitination; this interaction competes with GNAS-binding and thus inhibits agonist-induced cAMP production. Interacts with OPN3; the interaction results in a decrease in MC1R-mediated cAMP signaling and ultimately a decrease in melanin production in melanocytes.

The protein resides in the cell membrane. Its function is as follows. Receptor for MSH (alpha, beta and gamma) and ACTH. The activity of this receptor is mediated by G proteins which activate adenylate cyclase. Mediates melanogenesis, the production of eumelanin (black/brown) and phaeomelanin (red/yellow), via regulation of cAMP signaling in melanocytes. This chain is Melanocyte-stimulating hormone receptor (MC1R), found in Equus caballus (Horse).